We begin with the raw amino-acid sequence, 313 residues long: Proclavaminate amidinohydrolase (313 aa).

Histidine 121, aspartate 144, histidine 146, aspartate 148, aspartate 235, and aspartate 237 together coordinate Mn(2+).

The protein belongs to the arginase family. In terms of assembly, homohexamer. Requires Mn(2+) as cofactor.

It catalyses the reaction amidinoproclavaminate + H2O = proclavaminate + urea. It functions in the pathway antibiotic biosynthesis; clavulanate biosynthesis; clavulanate from D-glyceraldehyde 3-phosphate and L-arginine: step 4/8. This Streptomyces clavuligerus protein is Proclavaminate amidinohydrolase (pah).